The primary structure comprises 583 residues: Isocitrate dehydrogenase kinase/phosphatase (583 aa).

ATP contacts are provided by residues 315–321 (APGIRGM) and Lys336. Asp371 is a catalytic residue.

Belongs to the AceK family.

It localises to the cytoplasm. The catalysed reaction is L-seryl-[isocitrate dehydrogenase] + ATP = O-phospho-L-seryl-[isocitrate dehydrogenase] + ADP + H(+). Its function is as follows. Bifunctional enzyme which can phosphorylate or dephosphorylate isocitrate dehydrogenase (IDH) on a specific serine residue. This is a regulatory mechanism which enables bacteria to bypass the Krebs cycle via the glyoxylate shunt in response to the source of carbon. When bacteria are grown on glucose, IDH is fully active and unphosphorylated, but when grown on acetate or ethanol, the activity of IDH declines drastically concomitant with its phosphorylation. In Salmonella gallinarum (strain 287/91 / NCTC 13346), this protein is Isocitrate dehydrogenase kinase/phosphatase.